We begin with the raw amino-acid sequence, 215 residues long: Probable transaldolase (215 aa).

The active-site Schiff-base intermediate with substrate is Lys-83.

This sequence belongs to the transaldolase family. Type 3B subfamily.

The protein localises to the cytoplasm. The enzyme catalyses D-sedoheptulose 7-phosphate + D-glyceraldehyde 3-phosphate = D-erythrose 4-phosphate + beta-D-fructose 6-phosphate. It functions in the pathway carbohydrate degradation; pentose phosphate pathway; D-glyceraldehyde 3-phosphate and beta-D-fructose 6-phosphate from D-ribose 5-phosphate and D-xylulose 5-phosphate (non-oxidative stage): step 2/3. Its function is as follows. Transaldolase is important for the balance of metabolites in the pentose-phosphate pathway. The polypeptide is Probable transaldolase (Clostridium kluyveri (strain NBRC 12016)).